Here is a 380-residue protein sequence, read N- to C-terminus: Glucose-1-phosphate adenylyltransferase (380 aa).

Residues G164, 179–180, and S190 contribute to the alpha-D-glucose 1-phosphate site; that span reads EK.

Belongs to the bacterial/plant glucose-1-phosphate adenylyltransferase family. As to quaternary structure, homotetramer.

The catalysed reaction is alpha-D-glucose 1-phosphate + ATP + H(+) = ADP-alpha-D-glucose + diphosphate. The protein operates within glycan biosynthesis; glycogen biosynthesis. Involved in the biosynthesis of ADP-glucose, a building block required for the elongation reactions to produce glycogen. Catalyzes the reaction between ATP and alpha-D-glucose 1-phosphate (G1P) to produce pyrophosphate and ADP-Glc. The protein is Glucose-1-phosphate adenylyltransferase of Ligilactobacillus salivarius (strain UCC118) (Lactobacillus salivarius).